Consider the following 568-residue polypeptide: Zinc finger protein 583 (568 aa).

The region spanning 6–77 (LTFEDVSVNF…QKKGARDTCP (72 aa)) is the KRAB domain. C2H2-type zinc fingers lie at residues 211 to 233 (LKCS…QRIH), 239 to 261 (YACV…KRIH), 267 to 289 (YECK…QRVH), 295 to 317 (YQCK…QRIH), 323 to 345 (FECI…QRIH), 351 to 373 (YVCH…QRIH), 379 to 401 (YECK…QRVH), 407 to 429 (YECK…QRVH), 435 to 457 (YECA…QRSH), 463 to 485 (YICK…QRIH), 491 to 513 (YECN…QRIH), and 519 to 541 (YECK…EKVH).

The protein belongs to the krueppel C2H2-type zinc-finger protein family.

It is found in the nucleus. May be involved in transcriptional regulation. The protein is Zinc finger protein 583 (Znf583) of Mus musculus (Mouse).